Here is a 291-residue protein sequence, read N- to C-terminus: Protease HtpX homolog (291 aa).

The next 2 membrane-spanning stretches (helical) occupy residues 4-24 and 38-58; these read VFLF…SARL and LGML…ISLL. H144 provides a ligand contact to Zn(2+). Residue E145 is part of the active site. H148 serves as a coordination point for Zn(2+). 2 helical membrane-spanning segments follow: residues 159-179 and 199-219; these read LIQG…AYAL and ISSI…VMYF. A Zn(2+)-binding site is contributed by E224.

The protein belongs to the peptidase M48B family. Requires Zn(2+) as cofactor.

Its subcellular location is the cell inner membrane. The sequence is that of Protease HtpX homolog from Chlorobium luteolum (strain DSM 273 / BCRC 81028 / 2530) (Pelodictyon luteolum).